A 323-amino-acid chain; its full sequence is Acetyl-coenzyme A carboxylase carboxyl transferase subunit alpha (323 aa).

The region spanning 39-293 is the CoA carboxyltransferase C-terminal domain; the sequence is RLSKKSQQLT…RRALADSLRQ (255 aa).

Belongs to the AccA family. Acetyl-CoA carboxylase is a heterohexamer composed of biotin carboxyl carrier protein (AccB), biotin carboxylase (AccC) and two subunits each of ACCase subunit alpha (AccA) and ACCase subunit beta (AccD).

It is found in the cytoplasm. It catalyses the reaction N(6)-carboxybiotinyl-L-lysyl-[protein] + acetyl-CoA = N(6)-biotinyl-L-lysyl-[protein] + malonyl-CoA. Its pathway is lipid metabolism; malonyl-CoA biosynthesis; malonyl-CoA from acetyl-CoA: step 1/1. In terms of biological role, component of the acetyl coenzyme A carboxylase (ACC) complex. First, biotin carboxylase catalyzes the carboxylation of biotin on its carrier protein (BCCP) and then the CO(2) group is transferred by the carboxyltransferase to acetyl-CoA to form malonyl-CoA. The protein is Acetyl-coenzyme A carboxylase carboxyl transferase subunit alpha of Paraburkholderia phytofirmans (strain DSM 17436 / LMG 22146 / PsJN) (Burkholderia phytofirmans).